Here is a 395-residue protein sequence, read N- to C-terminus: S-adenosylmethionine synthase (395 aa).

Histidine 14 is a binding site for ATP. Mg(2+) is bound at residue aspartate 16. Glutamate 42 is a binding site for K(+). Residues glutamate 55 and glutamine 98 each coordinate L-methionine. Residues 98-108 (QSPDIALGVDK) are flexible loop. ATP is bound by residues 175–177 (DGK), 242–243 (RF), aspartate 251, 257–258 (RK), alanine 274, and lysine 278. Position 251 (aspartate 251) interacts with L-methionine. L-methionine is bound at residue lysine 282.

This sequence belongs to the AdoMet synthase family. As to quaternary structure, homotetramer; dimer of dimers. The cofactor is Mg(2+). K(+) serves as cofactor.

It localises to the cytoplasm. It carries out the reaction L-methionine + ATP + H2O = S-adenosyl-L-methionine + phosphate + diphosphate. It participates in amino-acid biosynthesis; S-adenosyl-L-methionine biosynthesis; S-adenosyl-L-methionine from L-methionine: step 1/1. Its function is as follows. Catalyzes the formation of S-adenosylmethionine (AdoMet) from methionine and ATP. The overall synthetic reaction is composed of two sequential steps, AdoMet formation and the subsequent tripolyphosphate hydrolysis which occurs prior to release of AdoMet from the enzyme. This is S-adenosylmethionine synthase from Thermosipho africanus (strain TCF52B).